We begin with the raw amino-acid sequence, 311 residues long: Putative RNA-binding protein R05D3.8 (311 aa).

Residues 155-235 (KRLFVSYFPL…RRAVLKESVK (81 aa)) form the RRM domain. Residues 261–270 (TPSRPVTSVH) are compositionally biased toward polar residues. Positions 261 to 311 (TPSRPVTSVHASSSASSNHYDPSAAAGYAPLYHQPPESDPLSQCGYGPRKW) are disordered.

This Caenorhabditis elegans protein is Putative RNA-binding protein R05D3.8.